A 237-amino-acid chain; its full sequence is Sugar fermentation stimulation protein homolog (237 aa).

The protein belongs to the SfsA family.

The chain is Sugar fermentation stimulation protein homolog from Thioalkalivibrio sulfidiphilus (strain HL-EbGR7).